We begin with the raw amino-acid sequence, 56 residues long: Sec-independent protein translocase protein TatA (56 aa).

Residues 1 to 21 form a helical membrane-spanning segment; it reads MALGPWQIFLILVIILVLFGA.

The protein belongs to the TatA/E family. As to quaternary structure, the Tat system comprises two distinct complexes: a TatABC complex, containing multiple copies of TatA, TatB and TatC subunits, and a separate TatA complex, containing only TatA subunits. Substrates initially bind to the TatABC complex, which probably triggers association of the separate TatA complex to form the active translocon.

It localises to the cell inner membrane. Part of the twin-arginine translocation (Tat) system that transports large folded proteins containing a characteristic twin-arginine motif in their signal peptide across membranes. TatA could form the protein-conducting channel of the Tat system. The sequence is that of Sec-independent protein translocase protein TatA from Ehrlichia ruminantium (strain Welgevonden).